The sequence spans 228 residues: Phosphatidylserine decarboxylase proenzyme (228 aa).

The active-site Schiff-base intermediate with substrate; via pyruvic acid is the Ser-197. Ser-197 bears the Pyruvic acid (Ser); by autocatalysis mark.

The protein belongs to the phosphatidylserine decarboxylase family. PSD-A subfamily. As to quaternary structure, heterodimer of a large membrane-associated beta subunit and a small pyruvoyl-containing alpha subunit. Requires pyruvate as cofactor. In terms of processing, is synthesized initially as an inactive proenzyme. Formation of the active enzyme involves a self-maturation process in which the active site pyruvoyl group is generated from an internal serine residue via an autocatalytic post-translational modification. Two non-identical subunits are generated from the proenzyme in this reaction, and the pyruvate is formed at the N-terminus of the alpha chain, which is derived from the carboxyl end of the proenzyme. The post-translation cleavage follows an unusual pathway, termed non-hydrolytic serinolysis, in which the side chain hydroxyl group of the serine supplies its oxygen atom to form the C-terminus of the beta chain, while the remainder of the serine residue undergoes an oxidative deamination to produce ammonia and the pyruvoyl prosthetic group on the alpha chain.

It localises to the cell membrane. It carries out the reaction a 1,2-diacyl-sn-glycero-3-phospho-L-serine + H(+) = a 1,2-diacyl-sn-glycero-3-phosphoethanolamine + CO2. It participates in phospholipid metabolism; phosphatidylethanolamine biosynthesis; phosphatidylethanolamine from CDP-diacylglycerol: step 2/2. Catalyzes the formation of phosphatidylethanolamine (PtdEtn) from phosphatidylserine (PtdSer). In Bacteroides fragilis (strain ATCC 25285 / DSM 2151 / CCUG 4856 / JCM 11019 / LMG 10263 / NCTC 9343 / Onslow / VPI 2553 / EN-2), this protein is Phosphatidylserine decarboxylase proenzyme.